The primary structure comprises 133 residues: ATP synthase epsilon chain, chloroplastic (133 aa).

It belongs to the ATPase epsilon chain family. F-type ATPases have 2 components, CF(1) - the catalytic core - and CF(0) - the membrane proton channel. CF(1) has five subunits: alpha(3), beta(3), gamma(1), delta(1), epsilon(1). CF(0) has three main subunits: a, b and c.

The protein resides in the plastid. It localises to the chloroplast thylakoid membrane. Produces ATP from ADP in the presence of a proton gradient across the membrane. The protein is ATP synthase epsilon chain, chloroplastic of Cyanidium caldarium (Red alga).